Consider the following 369-residue polypeptide: Biglycan (369 aa).

The first 16 residues, 1–16 (MRPLWLLTLLLALSQA), serve as a signal peptide directing secretion. Positions 17 to 37 (LPFEQKGFWDFTLDDGLLMMN) are excised as a propeptide. Ser42 and Ser48 each carry an O-linked (Xyl...) (glycosaminoglycan) serine glycan. 2 disulfide bridges follow: Cys64–Cys70 and Cys68–Cys77. 12 LRR repeats span residues 83–103 (KTVPKEISPDTTLLDLQNNDI), 104–127 (SELRKDDFKGLQHLYALVLVNNKI), 128–151 (SKIHEKAFSPLRKLQKLYISKNHL), 152–172 (VEIPPNLPSSLVELRIHDNRI), 173–196 (RKVPKGVFSGLRNMNCIEMGGNPL), 197–221 (ENSGFEPGAFDGLKLNYLRISEAKL), 222–242 (TGIPKDLPETLNELHLDHNKI), 243–266 (QAIELEDLLRYSKLYRLGLGHNQI), 267–290 (RMIENGSLSFLPTLRELHLDNNKL), 291–313 (SRVPAGLPDLKLLQVVYLHSNNI), 314–343 (TKVGINDFCPMGFGVKRAYYNGISLFNNPV), and 344–369 (PYWEVQPATFRCVTDRLAIQFGNYKK). N-linked (GlcNAc...) asparagine glycans are attached at residues Asn271 and Asn312. Cys322 and Cys355 form a disulfide bridge.

It belongs to the small leucine-rich proteoglycan (SLRP) family. SLRP class I subfamily. In terms of assembly, homodimer. Forms a ternary complex with MFAP2 and ELN. Post-translationally, the two attached glycosaminoglycan chains can be either chondroitin sulfate or dermatan sulfate. Found in several connective tissues, especially in articular cartilages.

It is found in the secreted. Its subcellular location is the extracellular space. The protein resides in the extracellular matrix. Its function is as follows. May be involved in collagen fiber assembly. The chain is Biglycan (Bgn) from Rattus norvegicus (Rat).